We begin with the raw amino-acid sequence, 430 residues long: Phosphoribosylamine--glycine ligase (430 aa).

Residues 109–314 (RGLMNKYGID…FLTIAEHIIN (206 aa)) form the ATP-grasp domain. 136-192 (IREYPGDLAVKPTGLTGGKGVKVMGEQVDREGAVEYAMTLKDQVIILEERLLGEEFT) contributes to the ATP binding site. Q272, E284, and N286 together coordinate Mg(2+). Mn(2+) is bound by residues Q272, E284, and N286.

It belongs to the GARS family. It depends on Mg(2+) as a cofactor. Mn(2+) serves as cofactor.

The enzyme catalyses 5-phospho-beta-D-ribosylamine + glycine + ATP = N(1)-(5-phospho-beta-D-ribosyl)glycinamide + ADP + phosphate + H(+). It functions in the pathway purine metabolism; IMP biosynthesis via de novo pathway; N(1)-(5-phospho-D-ribosyl)glycinamide from 5-phospho-alpha-D-ribose 1-diphosphate: step 2/2. In Methanocorpusculum labreanum (strain ATCC 43576 / DSM 4855 / Z), this protein is Phosphoribosylamine--glycine ligase.